The primary structure comprises 706 residues: Glutamine-dependent NAD(+) synthetase (706 aa).

The CN hydrolase domain maps to 5 to 275 (VTVATCALNQ…VEVLTATLDL (271 aa)). Residue Glu-45 is the Proton acceptor; for glutaminase activity of the active site. The For glutaminase activity role is filled by Lys-114. Catalysis depends on Cys-175, which acts as the Nucleophile; for glutaminase activity. The tract at residues 325-706 (YHSPEEEISL…AAPQSLDGVD (382 aa)) is ligase. ATP is bound at residue 355–362 (PLSGGVDS). Residue Ser-357 is part of the active site.

In the C-terminal section; belongs to the NAD synthetase family. As to quaternary structure, homohexamer.

It carries out the reaction deamido-NAD(+) + L-glutamine + ATP + H2O = L-glutamate + AMP + diphosphate + NAD(+) + H(+). It participates in cofactor biosynthesis; NAD(+) biosynthesis; NAD(+) from deamido-NAD(+) (L-Gln route): step 1/1. Its function is as follows. Catalyzes the final step of the nicotinamide adenine dinucleotide (NAD) de novo synthesis pathway, the ATP-dependent amidation of deamido-NAD using L-glutamine as a nitrogen source. This chain is Glutamine-dependent NAD(+) synthetase (NADSYN1), found in Macaca fascicularis (Crab-eating macaque).